The primary structure comprises 323 residues: Beta-ketoacyl-[acyl-carrier-protein] synthase III (323 aa).

Active-site residues include Cys113 and His250. An ACP-binding region spans residues 251 to 255 (QANRR). The active site involves Asn280.

The protein belongs to the thiolase-like superfamily. FabH family. In terms of assembly, homodimer.

Its subcellular location is the cytoplasm. It catalyses the reaction malonyl-[ACP] + acetyl-CoA + H(+) = 3-oxobutanoyl-[ACP] + CO2 + CoA. It participates in lipid metabolism; fatty acid biosynthesis. Its function is as follows. Catalyzes the condensation reaction of fatty acid synthesis by the addition to an acyl acceptor of two carbons from malonyl-ACP. Catalyzes the first condensation reaction which initiates fatty acid synthesis and may therefore play a role in governing the total rate of fatty acid production. Possesses both acetoacetyl-ACP synthase and acetyl transacylase activities. Its substrate specificity determines the biosynthesis of branched-chain and/or straight-chain of fatty acids. The chain is Beta-ketoacyl-[acyl-carrier-protein] synthase III from Allorhizobium ampelinum (strain ATCC BAA-846 / DSM 112012 / S4) (Agrobacterium vitis (strain S4)).